The following is a 154-amino-acid chain: Superoxide dismutase [Cu-Zn] (154 aa).

Positions 47, 49, and 64 each coordinate Cu cation. Cys58 and Cys147 are joined by a disulfide. Positions 62-89 (GPHFNPFKKNHGGPTDSERHVGDLGNVK) are disordered. Positions 64, 72, 81, and 84 each coordinate Zn(2+). His121 is a binding site for Cu cation. Substrate is bound at residue Arg144.

This sequence belongs to the Cu-Zn superoxide dismutase family. Homodimer. Requires Cu cation as cofactor. Zn(2+) is required as a cofactor.

Its subcellular location is the cytoplasm. It carries out the reaction 2 superoxide + 2 H(+) = H2O2 + O2. Its function is as follows. Destroys radicals which are normally produced within the cells and which are toxic to biological systems. This chain is Superoxide dismutase [Cu-Zn] (SOD1), found in Yarrowia lipolytica (strain CLIB 122 / E 150) (Yeast).